The chain runs to 1239 residues: Codanin-1 (1239 aa).

A2 carries the N-acetylalanine modification. A compositionally biased stretch (polar residues) spans 61 to 72 (SRVLPQGPSTPA). Disordered regions lie at residues 61-249 (SRVL…PPGC) and 261-299 (KARTKQLQQSPTPASPIPESGSPVPSRTGNLTAEPADPA). At T70 the chain carries Phosphothreonine. Composition is skewed to low complexity over residues 77 to 88 (ASAALPARQGAP), 95 to 116 (ARSQLFPAAEPLSAAAEAPLAR), and 138 to 179 (GAAE…LSNL). An interaction with ASF1A/B region spans residues 193–213 (AGRTKPSRRINPTPVSEERSL). Over residues 219–238 (CFTSPPISCVPSSQPSTLDT) the composition is skewed to polar residues. At S270 the chain carries Phosphoserine. 2 helical membrane-spanning segments follow: residues 317-337 (CIAENLVPNLFLELFFVLQLL) and 631-651 (FAVVLLSLRLLAKFLGFVAFL).

Interacts with ASF1A and ASF1B. Found in a cytosolic complex with ASF1A, ASF1B, IPO4 and histones H3.1 and H4. In terms of tissue distribution, widely expressed in adult mice, the highest levels can be measured in erythropoietic cells.

Its subcellular location is the cytoplasm. The protein localises to the nucleus. The protein resides in the membrane. May act as a negative regulator of ASF1 in chromatin assembly. The polypeptide is Codanin-1 (Cdan1) (Mus musculus (Mouse)).